Reading from the N-terminus, the 287-residue chain is Pyridoxal 5'-phosphate synthase subunit PdxS (287 aa).

D21 contacts D-ribose 5-phosphate. K78 functions as the Schiff-base intermediate with D-ribose 5-phosphate in the catalytic mechanism. Residue G150 coordinates D-ribose 5-phosphate. Position 162 (R162) interacts with D-glyceraldehyde 3-phosphate. Residues G211 and G232–S233 each bind D-ribose 5-phosphate.

This sequence belongs to the PdxS/SNZ family. As to quaternary structure, in the presence of PdxT, forms a dodecamer of heterodimers.

The enzyme catalyses aldehydo-D-ribose 5-phosphate + D-glyceraldehyde 3-phosphate + L-glutamine = pyridoxal 5'-phosphate + L-glutamate + phosphate + 3 H2O + H(+). It participates in cofactor biosynthesis; pyridoxal 5'-phosphate biosynthesis. Its function is as follows. Catalyzes the formation of pyridoxal 5'-phosphate from ribose 5-phosphate (RBP), glyceraldehyde 3-phosphate (G3P) and ammonia. The ammonia is provided by the PdxT subunit. Can also use ribulose 5-phosphate and dihydroxyacetone phosphate as substrates, resulting from enzyme-catalyzed isomerization of RBP and G3P, respectively. The polypeptide is Pyridoxal 5'-phosphate synthase subunit PdxS (Francisella tularensis subsp. tularensis (strain FSC 198)).